A 266-amino-acid polypeptide reads, in one-letter code: Uridylate kinase (266 aa).

Residue 26-29 (KLGG) participates in ATP binding. Gly67 lines the UMP pocket. Positions 68 and 72 each coordinate ATP. UMP is bound by residues Asp87 and 148–155 (LGAPYFST). Residues Tyr181 and Asp184 each contribute to the ATP site.

This sequence belongs to the UMP kinase family. In terms of assembly, homohexamer.

It is found in the cytoplasm. It carries out the reaction UMP + ATP = UDP + ADP. The protein operates within pyrimidine metabolism; CTP biosynthesis via de novo pathway; UDP from UMP (UMPK route): step 1/1. Inhibited by UTP. Functionally, catalyzes the reversible phosphorylation of UMP to UDP. This Acidothermus cellulolyticus (strain ATCC 43068 / DSM 8971 / 11B) protein is Uridylate kinase.